We begin with the raw amino-acid sequence, 165 residues long: Lymphocyte antigen 6K (165 aa).

Residues 1-17 form the signal peptide; that stretch reads MALLALLLVVALPRVWT. The N-linked (GlcNAc...) asparagine glycan is linked to asparagine 20. The region spanning 47-141 is the UPAR/Ly6 domain; sequence ERENTFECQN…VFKEYAGSMG (95 aa). Glycine 138 carries the GPI-anchor amidated glycine lipid modification. Positions 139 to 165 are cleaved as a propeptide — removed in mature form; the sequence is SMGESCGGLWLAILLLLASIAAGLSLS.

Interacts with TEX101. As to expression, specifically expressed in testis (at protein level).

Its subcellular location is the secreted. The protein resides in the cytoplasm. The protein localises to the cell membrane. It is found in the cytoplasmic vesicle. It localises to the secretory vesicle. Its subcellular location is the acrosome. The protein resides in the membrane raft. Its function is as follows. Required for sperm migration into the oviduct and male fertility by controlling binding of sperm to zona pellucida. May play a role in cell growth. This chain is Lymphocyte antigen 6K, found in Homo sapiens (Human).